The following is a 487-amino-acid chain: F-box/LRR-repeat protein At1g48400 (487 aa).

Residues 9–57 enclose the F-box domain; that stretch reads RDSISNLPDEILGKILSLLPTKVAASTSVLSKRWRNLLGLVDNLCFDES. LRR repeat units follow at residues 71–97, 125–153, 174–199, 225–251, 327–358, and 359–384; these read SLRF…SLSR, HLHA…TLSA, SILG…YMRD, THNP…DYSS, TLHL…SIES, and NKDK…VIKG.

This is F-box/LRR-repeat protein At1g48400 from Arabidopsis thaliana (Mouse-ear cress).